The sequence spans 201 residues: Histidinol dehydrogenase (201 aa).

This sequence belongs to the histidinol dehydrogenase family. As to quaternary structure, homodimer. The cofactor is Zn(2+).

It catalyses the reaction L-histidinol + 2 NAD(+) + H2O = L-histidine + 2 NADH + 3 H(+). The protein operates within amino-acid biosynthesis; L-histidine biosynthesis; L-histidine from 5-phospho-alpha-D-ribose 1-diphosphate: step 9/9. Catalyzes the sequential NAD-dependent oxidations of L-histidinol to L-histidinaldehyde and then to L-histidine. The sequence is that of Histidinol dehydrogenase (hisD) from Buchnera aphidicola subsp. Melaphis rhois.